The sequence spans 420 residues: Amino acid decarboxylase lolD1 (420 aa).

Lysine 62 is subject to N6-(pyridoxal phosphate)lysine. Pyridoxal 5'-phosphate is bound by residues serine 194, glycine 231, and 266-269; that span reads EPGT. Residue 315 to 316 participates in substrate binding; the sequence is IV. Cysteine 351 functions as the Proton donor; shared with dimeric partner in the catalytic mechanism. Position 351 is an S-nitrosocysteine (cysteine 351). Aspartate 352 lines the substrate pocket. Tyrosine 381 is a binding site for pyridoxal 5'-phosphate.

Belongs to the Orn/Lys/Arg decarboxylase class-II family. As to quaternary structure, homodimer. The cofactor is pyridoxal 5'-phosphate.

The protein operates within alkaloid biosynthesis. Amino acid decarboxylase; part of the gene cluster that mediates the biosynthesis of loline alkaloids, potent insecticidal agents composed of a pyrrolizidine ring system and an uncommon ether bridge linking carbons 2 and 7. Lolines are structurally differentiated by the various modifications of the L-amino group and include norloline, loline, N-methylloline, N-acetylloline, N-acetylnorloline, and N-formylloline. The first committed step is the condensation of O-acetyl-L-homoserine (derived from L-aspartic acid) and L-proline, probably catalyzed by the gamma-type pyridoxal 5'-phosphate(PLP)-dependent enzyme lolC, to give the diamino diacid, NACPP. Ensuing cyclization, decarboxylation, and acetylation steps yield 1-exo-acetamidopyrrolizidine (AcAP). LolO is required for installation of the ether bridge upon the pathway intermediate, 1-exo-acetamidopyrrolizidine (AcAP). In sequential 2-oxoglutarate- and O(2)-consuming steps, lolO removes hydrogens from C2 and C7 of AcAP to form both carbon-oxygen bonds in N-acetylnorloline (NANL), the precursor to all other lolines. The enzymes lolD, lolE, lolF and lolT have also been proposed to be involved in the ether-bridge installation. Further processing of the exocyclic moiety of NANL by fungal N-acetamidase (LolN), methyltransferase (LolM), and cytochrome P450 (LolP) enzymes, with occasional involvement of a plant acetyltransferase, generates the other known lolines. LolN transforms NANL to norlonine which is monomethylated and dimethylated to respectively lonine and N-methyllonine (NML) by lolM. LolP catalyzes hydroxylation of the methyl group in N-methylloline (NML) and further oxygenation to N-formylloline (NFL). A plant acetyltransferase is responsible for the acetylation of loline to form N-acetylloline (NAL). LolA might interact with aspartate kinase to prevent feedback inhibition of its activity by these end products and thereby promote production of L-homoserine from L-aspartate. This Epichloe uncinata (Endophyte fungus) protein is Amino acid decarboxylase lolD1.